The primary structure comprises 345 residues: Transcription factor 19 (345 aa).

One can recognise an FHA domain in the interval 31-88 (YRLGHRADLCDVALRPQQEPGLISGIHAELHAEPRGDDWRVSLEDHSSQGTLVNNVRL). Serine 78 is subject to Phosphoserine. Residues 190–227 (LTFSPSWGGPKSLPVPAPPGEMGTTPSAPPQRNRRKSV) are disordered. The segment at 293 to 342 (AAPCCCLPQEETVAWVQCDGCDVWFHVACVGCSIQAAREADFRCPGCRAG) adopts a PHD-type zinc-finger fold. Zn(2+) contacts are provided by cysteine 296, cysteine 298, cysteine 310, cysteine 313, histidine 318, cysteine 321, cysteine 336, and cysteine 339.

The protein resides in the nucleus. Its function is as follows. Potential transcription factor that may play a role in the regulation of genes involved in cell cycle G1/S transition. May bind to regulatory elements of genes, including the promoter of the transcription factor FOXO1. In Homo sapiens (Human), this protein is Transcription factor 19 (TCF19).